We begin with the raw amino-acid sequence, 223 residues long: 3,4-dihydroxy-2-butanone 4-phosphate synthase (223 aa).

Residues R39–E40, D44, R152–T156, and E176 each bind D-ribulose 5-phosphate. E40 is a binding site for Mg(2+). H155 is a binding site for Mg(2+).

Belongs to the DHBP synthase family. As to quaternary structure, homodimer. Mg(2+) serves as cofactor. Requires Mn(2+) as cofactor.

It carries out the reaction D-ribulose 5-phosphate = (2S)-2-hydroxy-3-oxobutyl phosphate + formate + H(+). Its pathway is cofactor biosynthesis; riboflavin biosynthesis; 2-hydroxy-3-oxobutyl phosphate from D-ribulose 5-phosphate: step 1/1. Catalyzes the conversion of D-ribulose 5-phosphate to formate and 3,4-dihydroxy-2-butanone 4-phosphate. In Desulfovibrio desulfuricans (strain ATCC 27774 / DSM 6949 / MB), this protein is 3,4-dihydroxy-2-butanone 4-phosphate synthase.